Reading from the N-terminus, the 382-residue chain is ATP phosphoribosyltransferase regulatory subunit (382 aa).

It belongs to the class-II aminoacyl-tRNA synthetase family. HisZ subfamily. As to quaternary structure, heteromultimer composed of HisG and HisZ subunits.

It localises to the cytoplasm. The protein operates within amino-acid biosynthesis; L-histidine biosynthesis; L-histidine from 5-phospho-alpha-D-ribose 1-diphosphate: step 1/9. Functionally, required for the first step of histidine biosynthesis. May allow the feedback regulation of ATP phosphoribosyltransferase activity by histidine. This chain is ATP phosphoribosyltransferase regulatory subunit, found in Burkholderia cenocepacia (strain HI2424).